Here is a 388-residue protein sequence, read N- to C-terminus: S-adenosylmethionine synthase (388 aa).

His-17 provides a ligand contact to ATP. Residue Asp-19 coordinates Mg(2+). Residue Glu-45 participates in K(+) binding. Positions 58 and 102 each coordinate L-methionine. The interval 102–112 (QSVHIAQGVDA) is flexible loop. Residues 167–169 (DAK), Asp-241, 247–248 (RK), Ala-264, and Lys-268 contribute to the ATP site. L-methionine is bound at residue Asp-241. An L-methionine-binding site is contributed by Lys-272.

The protein belongs to the AdoMet synthase family. Homotetramer; dimer of dimers. Mg(2+) is required as a cofactor. The cofactor is K(+).

The protein resides in the cytoplasm. It catalyses the reaction L-methionine + ATP + H2O = S-adenosyl-L-methionine + phosphate + diphosphate. Its pathway is amino-acid biosynthesis; S-adenosyl-L-methionine biosynthesis; S-adenosyl-L-methionine from L-methionine: step 1/1. Catalyzes the formation of S-adenosylmethionine (AdoMet) from methionine and ATP. The overall synthetic reaction is composed of two sequential steps, AdoMet formation and the subsequent tripolyphosphate hydrolysis which occurs prior to release of AdoMet from the enzyme. The protein is S-adenosylmethionine synthase of Maricaulis maris (strain MCS10) (Caulobacter maris).